The chain runs to 224 residues: Elongation factor 1-beta 2 (224 aa).

At Ala2 the chain carries N-acetylalanine. The 52-residue stretch at 14-65 (VKSVEEHLAGKTYISGDQLSVDDVKVYAAVPVKPSDAFPNASKWYESVASQL) folds into the GST C-terminal domain. A disordered region spans residues 89–139 (EAEAPAAAADDDDDMDLFGDETEEEKKAAEEREAAKKDTKKPKESGKSSVL). Acidic residues predominate over residues 97-111 (ADDDDDMDLFGDETE). The span at 112-134 (EEKKAAEEREAAKKDTKKPKESG) shows a compositional bias: basic and acidic residues.

Belongs to the EF-1-beta/EF-1-delta family. EF-1 is composed of 4 subunits: alpha, beta (1B-alpha=beta'), delta (1B-beta), and gamma (1B-gamma).

Functionally, EF-1-beta and EF-1-delta stimulate the exchange of GDP bound to EF-1-alpha to GTP. The chain is Elongation factor 1-beta 2 from Arabidopsis thaliana (Mouse-ear cress).